A 177-amino-acid chain; its full sequence is Inner membrane-spanning protein YciB (177 aa).

The next 5 membrane-spanning stretches (helical) occupy residues isoleucine 22–isoleucine 42, isoleucine 50–asparagine 70, tryptophan 76–methionine 96, phenylalanine 121–leucine 141, and valine 151–phenylalanine 171.

The protein belongs to the YciB family.

Its subcellular location is the cell inner membrane. Functionally, plays a role in cell envelope biogenesis, maintenance of cell envelope integrity and membrane homeostasis. This Buchnera aphidicola subsp. Schizaphis graminum (strain Sg) protein is Inner membrane-spanning protein YciB.